Consider the following 456-residue polypeptide: Acyl-CoA transferase FPSE_08120 (456 aa).

Residues 1-33 constitute a mitochondrion transit peptide; it reads MARLLFSGQRLRPSFLRSYIRANPSSTPSATRA.

It belongs to the CoA-transferase III family.

The protein localises to the mitochondrion. In terms of biological role, acyl-CoA transferase; part of the Fusarium detoxification of benzoxazolinone cluster involved in the degradation of benzoxazolinones produced by the host plant. Maize, wheat, and rye produce the 2 benzoxazinone phytoanticipins 2,4-dihy-droxy-7-methoxy-1,4-benzoxazin-3-one (DIMBOA) and 2,4-dihydroxy-1,4-benzoxazin-3-one (DIBOA) that, due to their inherent instability once released, spontaneously degrade to the more stable corresponding benzoxazolinones, 6-methoxy-2-benzoxazolinone (MBOA) and 2-benzoxazolinone (BOA), respectively. The first step in the detoxification of benzoxazolinones involves the hydrolysis of the cyclic ester bond of benzoxazolinones by the gamma-lactamase FDB1 to aminophenols. FDB1 is able to convert 2-benzoxazolinone (BOA) into 2-aminophenol (2-AP), as well as 6-methoxy-2-benzoxazolinone (MBOA) into 5-methoxy-2-aminophenol (2-AMP). The N-malonyltransferase FDB2 then metabolizes aminophenols via N-malonylation to non-toxic malonamic acids. FDB2 converts 2-AP into N-(2-hydroxyphenyl) malonamic acid (HPMA) and 2-AMP into N-(2-hydroxy-4-methoxyphenyl) malonamic acid (HMPMA). The cluster also contains 2 transcription factors (FDB3 and FPSE_08121), an aldo-keto reductase (FPSE_08125) that possibly associates with a ketone component of BOA and MBOA degradation, an esterase (FPSE_08126), an acyl-CoA transferase (FPSE_08120), a solute carrier protein (FPSE_08119) and a transmembrane transporter (FPSE_08127) proposed to shuttle metabolites of benzoxazolinone degradation. In Fusarium pseudograminearum (strain CS3096) (Wheat and barley crown-rot fungus), this protein is Acyl-CoA transferase FPSE_08120.